We begin with the raw amino-acid sequence, 331 residues long: Ribosomal RNA small subunit methyltransferase H (331 aa).

S-adenosyl-L-methionine-binding positions include 56–58 (GGH), aspartate 76, phenylalanine 100, aspartate 122, and glutamine 129.

This sequence belongs to the methyltransferase superfamily. RsmH family.

It localises to the cytoplasm. It catalyses the reaction cytidine(1402) in 16S rRNA + S-adenosyl-L-methionine = N(4)-methylcytidine(1402) in 16S rRNA + S-adenosyl-L-homocysteine + H(+). Functionally, specifically methylates the N4 position of cytidine in position 1402 (C1402) of 16S rRNA. The sequence is that of Ribosomal RNA small subunit methyltransferase H from Chromohalobacter salexigens (strain ATCC BAA-138 / DSM 3043 / CIP 106854 / NCIMB 13768 / 1H11).